A 172-amino-acid chain; its full sequence is Calcium channel flower homolog (172 aa).

The Cytoplasmic portion of the chain corresponds to 1 to 32; sequence MSSSGGAPGASASSAPPAQEEGMTWWYRWLCR. A helical transmembrane segment spans residues 33–53; sequence LSGVLGAVSCAISGLFNCITI. At 54–57 the chain is on the extracellular side; the sequence is HPLN. Residues 58 to 78 traverse the membrane as a helical segment; the sequence is IAAGVWMIMNAFILLLCEAPF. Topologically, residues 79–102 are cytoplasmic; the sequence is CCQFIEFANTVAEKVDRLRSWQKA. The chain crosses the membrane as a helical span at residues 103–123; that stretch reads VFYCGMAVVPIVISLTLTTLL. At 124 to 125 the chain is on the extracellular side; it reads GN. Residues 126-142 traverse the membrane as a helical segment; that stretch reads AIAFATGVLYGLSALGK. At 143–172 the chain is on the cytoplasmic side; that stretch reads KGDAISYARIQQQRQQADEEKLAETLEGEL.

Belongs to the calcium channel flower family. Interacts with adaptor protein complex 2 (AP-2). As to expression, detected in skin cells at low levels of expression (at protein level).

The protein resides in the cell membrane. It localises to the cytoplasmic vesicle. It is found in the secretory vesicle. The protein localises to the synaptic vesicle. Its subcellular location is the golgi apparatus. The protein resides in the vesicle. It localises to the early endosome. It is found in the recycling endosome. The protein localises to the endoplasmic reticulum membrane. Functionally, transmembrane protein which mediates synaptic endocytosis and fitness-based cell culling. In response to different stimulus strengths, controls two major modes of synaptic vesicle (SV) retrieval in hippocampal neurons; Clathrin-mediated endocytosis (CME) in response to mild stimulation and activity-dependent bulk endocytosis (ADBE) in response to strong stimulation. In cytotoxic T-lymphoocytes (CTLs) facilitates calcium-dependent endocytosis of cytotoxic granules at the immuno synapse. Different isoforms work as fitness fingerprints in 'loser' and 'winner' cells and thereby mediate win/lose decisions as part of the cell competition process. Functions with the other flower isoforms to produce tissue-specific fitness fingerprints that identify unfit or fit cells during cell selection processes in order to maintain tissue health. During cell competition, if levels of this isoform in cells is higher than in the surrounding neighboring cells, the cells are recognized as 'winner' cells, and do not undergo elimination via apoptosis. Its function is as follows. Functions with the other flower isoforms to produce tissue-specific fitness fingerprints that identify unfit or fit cells during cell selection processes in order to maintain tissue health. During cell competition, if levels of this isoform in unfit cells is higher than in the surrounding neighboring cells, the cells are recognized as 'loser' cells, and undergo elimination via apoptosis to be replaced by the surrounding healthy 'winner' cell population. The protein is Calcium channel flower homolog (CACFD1) of Homo sapiens (Human).